Consider the following 372-residue polypeptide: MFFNIFKSSIKGFLLNLPTPINLNYWYGFGSMLGLIYSIQIISGLILSWFYFIDLSGGFKSLILIMQDVWGGWFIRFIHSSGVSLFMFIMYLHILRGLIYGSFCKVDVWYSGILLLFICMGSAFLGYVLPWGSMSYWGMTVVTNMLSAIPMVGVYLVETIWGGSSAGVSTLVRFFSFHYLLSLFIMVFILIHLILLHECGSSNPLGVYYSCEKFTFHPLFSLKDTLVFVLVVFLYWFCIFVCPYLLLDAINFEEINFMMTPSHIKPEWYFLFIYCILRSTPSKLGGVILMVMAILMLVFLGIGKNLGSVLMVKTLYWKLMLSSFLLVFIILTIMGGYTVEYPYDILGNVNSVLYFFIYVIMLLYSFMFNFVY.

4 helical membrane passes run 29–49 (FGSMLGLIYSIQIISGLILSW), 73–95 (WFIRFIHSSGVSLFMFIMYLHIL), 108–128 (VWYSGILLLFICMGSAFLGYV), and 174–194 (FFSFHYLLSLFIMVFILIHLI). Heme b contacts are provided by His79 and His93. Positions 178 and 192 each coordinate heme b. His197 is a binding site for a ubiquinone. The next 4 helical transmembrane spans lie at 220 to 240 (FSLKDTLVFVLVVFLYWFCIF), 284 to 301 (LGGVILMVMAILMLVFLG), 311 to 336 (MVKTLYWKLMLSSFLLVFIILTIMGG), and 344 to 363 (DILGNVNSVLYFFIYVIMLL).

Belongs to the cytochrome b family. As to quaternary structure, the main subunits of complex b-c1 are: cytochrome b, cytochrome c1 and the Rieske protein. It depends on heme b as a cofactor.

Its subcellular location is the mitochondrion inner membrane. In terms of biological role, component of the ubiquinol-cytochrome c reductase complex (complex III or cytochrome b-c1 complex) that is part of the mitochondrial respiratory chain. The b-c1 complex mediates electron transfer from ubiquinol to cytochrome c. Contributes to the generation of a proton gradient across the mitochondrial membrane that is then used for ATP synthesis. The protein is Cytochrome b (mt:Cyt-b) of Leptorhynchoides thecatus (Thorny-headed worm).